The primary structure comprises 70 residues: Cold shock-like protein CspJ (70 aa).

The CSD domain maps to 7 to 67 (GLVKWFNPEK…GPKGPSAVNV (61 aa)).

The protein localises to the cytoplasm. This Salmonella typhi protein is Cold shock-like protein CspJ (cspJ).